The chain runs to 639 residues: Lipoteichoic acid synthase 1 (639 aa).

Residues 1-3 (MKK) are Cytoplasmic-facing. The helical transmembrane segment at 4-24 (LFSYKLSFFVLAVILFWAKTY) threads the bilayer. Residues 25-41 (LSYKTEFNLGVKGTTQE) are Extracellular-facing. A helical transmembrane segment spans residues 42–62 (ILLIFNPFSSAVFFLGLALLA). At 63–67 (KGRKS) the chain is on the cytoplasmic side. A helical transmembrane segment spans residues 68-88 (AIIMLIIDFLMTFVLYANILF). At 89-116 (YRFFDDFLTFPNIKQSGNVGNMGDGIFS) the chain is on the extracellular side. The helical transmembrane segment at 117-137 (IMAGHDIFYFLDIIILIAVLI) threads the bilayer. At 138 to 150 (WRPELKEYKMKKR) the chain is on the cytoplasmic side. A helical transmembrane segment spans residues 151–171 (FASLVILSGIALFFINLHYAE). Residues 172–639 (KDRPQLLTRT…YHYGKEKEIK (468 aa)) lie on the Extracellular side of the membrane. E252 and T297 together coordinate Mn(2+). Residue T297 is part of the active site. H413 contributes to the substrate binding site. Residues D472 and H473 each contribute to the Mn(2+) site.

It belongs to the LTA synthase family. Proteolytically cleaved by the type I signal peptidases SipT and SipV.

It is found in the cell membrane. It localises to the secreted. It functions in the pathway cell wall biogenesis; lipoteichoic acid biosynthesis. Its function is as follows. Catalyzes the polymerization of lipoteichoic acid (LTA) polyglycerol phosphate, a reaction that presumably uses phosphatidylglycerol (PG) as substrate. This chain is Lipoteichoic acid synthase 1 (ltaS1), found in Bacillus subtilis (strain 168).